A 519-amino-acid chain; its full sequence is NADH dehydrogenase (519 aa).

The tract at residues 1–183 (MVLEPQIKSQ…YLNGESFTSG (183 aa)) is membrane-binding. A catalytic region spans residues 184 to 519 (RMTVEEILAQ…TTPAESAAAK (336 aa)). Position 210–241 (210–241 (DVLVVGGGPAGASSAIYAARKGIRTGIVADRF)) interacts with FAD. A disulfide bridge connects residues C337 and C340. 349–379 (DVAVIGGGNSGVEAAIDLAGIVNHVTVLEFM) provides a ligand contact to NAD(+). Residue 469–479 (TNVPGVFAAGD) participates in FAD binding.

This sequence belongs to the class-II pyridine nucleotide-disulfide oxidoreductase family. In terms of assembly, homodimer. Requires FAD as cofactor.

The protein resides in the cell membrane. It carries out the reaction a ubiquinone + NADH + 5 H(+)(in) = a ubiquinol + NAD(+) + 4 H(+)(out). In terms of biological role, transfer of electrons from NADH to the respiratory chain. The immediate electron acceptor for the enzyme is believed to be ubiquinone. This is NADH dehydrogenase (ahpF) from Ferdinandcohnia aciditolerans (strain JCM 32973 / CCTCC AB 2017280 / YN-1) (Bacillus aciditolerans).